The following is a 97-amino-acid chain: Large ribosomal subunit protein bL28 (97 aa).

Residues 1-20 (MSRRCELTAKGPQVGHKVSH) form a disordered region.

The protein belongs to the bacterial ribosomal protein bL28 family.

The sequence is that of Large ribosomal subunit protein bL28 from Afipia carboxidovorans (strain ATCC 49405 / DSM 1227 / KCTC 32145 / OM5) (Oligotropha carboxidovorans).